An 89-amino-acid polypeptide reads, in one-letter code: Rho beta-crystallin (89 aa).

H31 contacts substrate.

The protein belongs to the aldo/keto reductase family. In terms of assembly, monomer.

The chain is Rho beta-crystallin from Lepidodactylus lugubris (Mourning gecko).